The primary structure comprises 488 residues: Glutamyl-tRNA(Gln) amidotransferase subunit B, mitochondrial (488 aa).

It belongs to the GatB/GatE family. GatB subfamily. As to quaternary structure, subunit of the heterotrimeric GatFAB amidotransferase (AdT) complex, composed of A, B and F subunits.

Its subcellular location is the mitochondrion. The catalysed reaction is L-glutamyl-tRNA(Gln) + L-glutamine + ATP + H2O = L-glutaminyl-tRNA(Gln) + L-glutamate + ADP + phosphate + H(+). Functionally, allows the formation of correctly charged Gln-tRNA(Gln) through the transamidation of misacylated Glu-tRNA(Gln) in the mitochondria. The reaction takes place in the presence of glutamine and ATP through an activated gamma-phospho-Glu-tRNA(Gln). This chain is Glutamyl-tRNA(Gln) amidotransferase subunit B, mitochondrial, found in Candida albicans (strain SC5314 / ATCC MYA-2876) (Yeast).